A 71-amino-acid chain; its full sequence is Protein CYSTEINE-RICH TRANSMEMBRANE MODULE 8 (71 aa).

Positions 1 to 22 (MNQSAQNYFSVQKPSETSSGPY) are enriched in polar residues. The disordered stretch occupies residues 1 to 35 (MNQSAQNYFSVQKPSETSSGPYTSPPPIGYPTRDA). Residues 48–64 (NSKGVNPEGCCAAICCC) form a helical membrane-spanning segment.

The protein belongs to the CYSTM1 family. As to expression, mostly expressed in stems, siliques, roots and flowers and, to a lower extent, in leaves.

Its subcellular location is the membrane. It is found in the nucleus. In terms of biological role, involved in resistance to abiotic stress. The polypeptide is Protein CYSTEINE-RICH TRANSMEMBRANE MODULE 8 (Arabidopsis thaliana (Mouse-ear cress)).